The primary structure comprises 620 residues: Glutathione-regulated potassium-efflux system protein KefC (620 aa).

The next 12 membrane-spanning stretches (helical) occupy residues 4–24 (HTLIQALIYLGSAALIVPIAV), 26–46 (LGLGSVLGYLIAGCIIGPWGL), 54–74 (SILHFAEIGVVLMLFIIGLEL), 90–110 (GALQMVICGGLLGLFCMLLGL), 114–134 (VAELIGMTLALSSTAIAMQAM), 149–169 (FAVLLFQDIAAIPLVAMIPLL), 178–198 (MGAFALSALKVAGALVLVVLL), 218–238 (VFSAVALFLVFGFGLLLEEVG), 270–290 (GLLLGLFFIGVGMSIDFGTLL), 294–314 (LRIVILLLGFLIIKIAMLWLI), 327–347 (WFAVLLGQGSEFAFVVFGAAQ), and 359–379 (SLTLAVALSMAATPILLVILN). The RCK N-terminal domain maps to 399–518 (QPRVIIAGFG…AGVEKPERET (120 aa)). Residues 597–620 (GWQGTEEGKHTGNMADEPETKPSS) form a disordered region.

Belongs to the monovalent cation:proton antiporter 2 (CPA2) transporter (TC 2.A.37) family. KefC subfamily. As to quaternary structure, homodimer. Interacts with the regulatory subunit KefF.

Its subcellular location is the cell inner membrane. In terms of biological role, pore-forming subunit of a potassium efflux system that confers protection against electrophiles. Catalyzes K(+)/H(+) antiport. The chain is Glutathione-regulated potassium-efflux system protein KefC from Escherichia coli O8 (strain IAI1).